Reading from the N-terminus, the 938-residue chain is AP-2 complex subunit alpha-2 (938 aa).

Residues 11-12 (RG), Lys-43, Tyr-53, and 57-61 (KYVCK) each bind a 1,2-diacyl-sn-glycero-3-phospho-(1D-myo-inositol-3,4,5-trisphosphate). The disordered stretch occupies residues 616–677 (LKKKKGPSTV…APPVPAGPPP (62 aa)). Residues 645-668 (PALASTSAVSTPSPSADLLGLGAA) show a composition bias toward low complexity.

The protein belongs to the adaptor complexes large subunit family. In terms of assembly, adaptor protein complex 2 (AP-2) is a heterotetramer composed of two large adaptins (alpha-type subunit AP2A1 or AP2A2 and beta-type subunit AP2B1), a medium adaptin (mu-type subunit AP2M1) and a small adaptin (sigma-type subunit AP2S1). Binds clathrin. Binds EPN1, EPS15, AMPH, SNAP91 and BIN1. Interacts with HIP1. Interacts with DGKD. Interacts with DENND1A, DENND1B and DENND1C. Interacts with FCHO1. Interacts with ATAT1; this interaction is required for efficient alpha-tubulin acetylation by ATAT1. Interacts with KIAA1107. Together with AP2B1 and AP2M1, it interacts with ADAM10; this interaction facilitates ADAM10 endocytosis from the plasma membrane during long-term potentiation in hippocampal neurons. Interacts with CLN3 (via dileucine motif). Interacts with ABCB11; this interaction regulates cell membrane expression of ABCB11 through its internalization in a clathrin-dependent manner and its subsequent degradation. Interacts with DNAJC6.

It localises to the cell membrane. The protein localises to the membrane. The protein resides in the coated pit. In terms of biological role, component of the adaptor protein complex 2 (AP-2). Adaptor protein complexes function in protein transport via transport vesicles in different membrane traffic pathways. Adaptor protein complexes are vesicle coat components and appear to be involved in cargo selection and vesicle formation. AP-2 is involved in clathrin-dependent endocytosis in which cargo proteins are incorporated into vesicles surrounded by clathrin (clathrin-coated vesicles, CCVs) which are destined for fusion with the early endosome. The clathrin lattice serves as a mechanical scaffold but is itself unable to bind directly to membrane components. Clathrin-associated adaptor protein (AP) complexes which can bind directly to both the clathrin lattice and to the lipid and protein components of membranes are considered to be the major clathrin adaptors contributing the CCV formation. AP-2 also serves as a cargo receptor to selectively sort the membrane proteins involved in receptor-mediated endocytosis. AP-2 seems to play a role in the recycling of synaptic vesicle membranes from the presynaptic surface. AP-2 recognizes Y-X-X-[FILMV] (Y-X-X-Phi) and [ED]-X-X-X-L-[LI] endocytosis signal motifs within the cytosolic tails of transmembrane cargo molecules. AP-2 may also play a role in maintaining normal post-endocytic trafficking through the ARF6-regulated, non-clathrin pathway. During long-term potentiation in hippocampal neurons, AP-2 is responsible for the endocytosis of ADAM10. The AP-2 alpha subunit binds polyphosphoinositide-containing lipids, positioning AP-2 on the membrane. The AP-2 alpha subunit acts via its C-terminal appendage domain as a scaffolding platform for endocytic accessory proteins. The AP-2 alpha and AP-2 sigma subunits are thought to contribute to the recognition of the [ED]-X-X-X-L-[LI] motif. The sequence is that of AP-2 complex subunit alpha-2 from Bos taurus (Bovine).